The sequence spans 545 residues: Esterase-5C (545 aa).

The signal sequence occupies residues Met-1 to Ala-19. Cysteines 84 and 103 form a disulfide. The N-linked (GlcNAc...) asparagine glycan is linked to Asn-113. The active-site Acyl-ester intermediate is the Ser-207. An intrachain disulfide couples Cys-259 to Cys-271. Asn-421 carries N-linked (GlcNAc...) asparagine glycosylation. The active-site Charge relay system is His-467. The N-linked (GlcNAc...) asparagine glycan is linked to Asn-507. The cysteines at positions 515 and 536 are disulfide-linked.

This sequence belongs to the type-B carboxylesterase/lipase family.

Its subcellular location is the secreted. It catalyses the reaction a carboxylic ester + H2O = an alcohol + a carboxylate + H(+). In Drosophila miranda (Fruit fly), this protein is Esterase-5C (Est-5C).